Reading from the N-terminus, the 866-residue chain is Interleukin-17 receptor A (866 aa).

An N-terminal signal peptide occupies residues 1-32 (MGAARSPPSAVPGPLLGLLLLLLGVLAPGGAS). Residues 33–320 (LRLLDHRALV…EPIPDYMPLW (288 aa)) lie on the Extracellular side of the membrane. A disulfide bridge links cysteine 43 with cysteine 50. N-linked (GlcNAc...) asparagine glycans are attached at residues asparagine 49, asparagine 54, and asparagine 67. Disulfide bonds link cysteine 57-cysteine 126 and cysteine 185-cysteine 196. Residues asparagine 206, asparagine 225, asparagine 242, and asparagine 265 are each glycosylated (N-linked (GlcNAc...) asparagine). 3 disulfide bridges follow: cysteine 245–cysteine 276, cysteine 277–cysteine 303, and cysteine 290–cysteine 294. Residues 321 to 341 (VYWFITGISILLVGSVILLIV) traverse the membrane as a helical segment. Topologically, residues 342-866 (CMTWRLAGPG…MGSESEGPSA (525 aa)) are cytoplasmic. In terms of domain architecture, SEFIR spans 377 to 534 (PRKVWIIYSA…LMDRFEEVYF (158 aa)). Residues serine 708 and serine 736 each carry the phosphoserine modification. 2 disordered regions span residues 717 to 736 (LFLP…PMAS) and 773 to 840 (MVLT…RSLQ). The segment covering 788 to 801 (QSVQSDQGYISRSS) has biased composition (polar residues). Over residues 809-819 (TEMEEEEEEEQ) the composition is skewed to acidic residues.

Forms heterodimers with IL17RC; the heterodimer binds IL17A and IL17F homodimers as well as the heterodimer formed by IL17A and IL17F. Forms complexes with 2:1 binding stoichiometry: two receptor chains for one interleukin molecule. IL17A homodimer preferentially drives the formation of IL17RA-IL17RC heterodimeric receptor complex, whereas IL17F homodimer forms predominantly complexes with IL17RC homodimer. IL17A homodimer adopts an asymmetrical ternary structure with one IL17RA molecule, allowing for high affinity interactions of one IL17A monomer with one IL17RA molecule (via D1 and D2 domains), while disfavoring binding of a second IL17RA molecule on the other IL17A monomer. IL17A-IL17F forms complexes with IL17RA-IL17RC, but with lower affinity when compared to IL17A homodimer. IL17RA chain cannot distinguish between IL17A and IL17F molecules, potentially enabling the formation of topologically distinct complexes. Interacts with TRAF3IP2. Forms heterodimers with IL17RE; the heterodimer binds IL17C. As to quaternary structure, (Microbial infection) Interacts with SARS coronavirus-2/SARS-CoV-2 virus protein ORF8. In terms of processing, glycosylated. In terms of tissue distribution, widely expressed.

The protein resides in the cell membrane. It localises to the secreted. Receptor for IL17A and IL17F, major effector cytokines of innate and adaptive immune system involved in antimicrobial host defense and maintenance of tissue integrity. Receptor for IL17A. Receptor for IL17F. Binds to IL17A with higher affinity than to IL17F. Binds IL17A and IL17F homodimers as part of a heterodimeric complex with IL17RC. Also binds heterodimers formed by IL17A and IL17F as part of a heterodimeric complex with IL17RC. Cytokine binding triggers homotypic interaction of IL17RA and IL17RC chains with TRAF3IP2 adapter, leading to TRAF6-mediated activation of NF-kappa-B and MAPkinase pathways, ultimately resulting in transcriptional activation of cytokines, chemokines, antimicrobial peptides and matrix metalloproteinases, with potential strong immune inflammation. Involved in antimicrobial host defense primarily promoting neutrophil activation and recruitment at infection sites to destroy extracellular bacteria and fungi. In secondary lymphoid organs, contributes to germinal center formation by regulating the chemotactic response of B cells to CXCL12 and CXCL13, enhancing retention of B cells within the germinal centers, B cell somatic hypermutation rate and selection toward plasma cells. Plays a role in the maintenance of the integrity of epithelial barriers during homeostasis and pathogen infection. Stimulates the production of antimicrobial beta-defensins DEFB1, DEFB103A, and DEFB104A by mucosal epithelial cells, limiting the entry of microbes through the epithelial barriers. Involved in antiviral host defense through various mechanisms. Enhances immunity against West Nile virus by promoting T cell cytotoxicity. Contributes to Influenza virus clearance by driving the differentiation of B-1a B cells, providing for production of virus-specific IgM antibodies at first line of host defense. Receptor for IL17C as part of a heterodimeric complex with IL17RE. Its function is as follows. (Microbial infection) Receptor for SARS coronavirus-2/SARS-CoV-2 virus protein ORF8, leading to IL17 pathway activation and an increased secretion of pro-inflammatory factors through activating NF-kappa-B signaling pathway. This chain is Interleukin-17 receptor A, found in Homo sapiens (Human).